The sequence spans 282 residues: 4-hydroxy-3-methylbut-2-enyl diphosphate reductase (282 aa).

Cysteine 14 contacts [4Fe-4S] cluster. (2E)-4-hydroxy-3-methylbut-2-enyl diphosphate is bound by residues histidine 43 and histidine 78. Positions 43 and 78 each coordinate dimethylallyl diphosphate. Isopentenyl diphosphate-binding residues include histidine 43 and histidine 78. Cysteine 100 serves as a coordination point for [4Fe-4S] cluster. Histidine 128 serves as a coordination point for (2E)-4-hydroxy-3-methylbut-2-enyl diphosphate. A dimethylallyl diphosphate-binding site is contributed by histidine 128. Histidine 128 contributes to the isopentenyl diphosphate binding site. Catalysis depends on glutamate 130, which acts as the Proton donor. Position 164 (threonine 164) interacts with (2E)-4-hydroxy-3-methylbut-2-enyl diphosphate. Residue cysteine 192 participates in [4Fe-4S] cluster binding. (2E)-4-hydroxy-3-methylbut-2-enyl diphosphate-binding residues include serine 220, serine 221, asparagine 222, and serine 266. Dimethylallyl diphosphate is bound by residues serine 220, serine 221, asparagine 222, and serine 266. Residues serine 220, serine 221, asparagine 222, and serine 266 each contribute to the isopentenyl diphosphate site.

The protein belongs to the IspH family. The cofactor is [4Fe-4S] cluster.

The enzyme catalyses isopentenyl diphosphate + 2 oxidized [2Fe-2S]-[ferredoxin] + H2O = (2E)-4-hydroxy-3-methylbut-2-enyl diphosphate + 2 reduced [2Fe-2S]-[ferredoxin] + 2 H(+). It carries out the reaction dimethylallyl diphosphate + 2 oxidized [2Fe-2S]-[ferredoxin] + H2O = (2E)-4-hydroxy-3-methylbut-2-enyl diphosphate + 2 reduced [2Fe-2S]-[ferredoxin] + 2 H(+). It functions in the pathway isoprenoid biosynthesis; dimethylallyl diphosphate biosynthesis; dimethylallyl diphosphate from (2E)-4-hydroxy-3-methylbutenyl diphosphate: step 1/1. The protein operates within isoprenoid biosynthesis; isopentenyl diphosphate biosynthesis via DXP pathway; isopentenyl diphosphate from 1-deoxy-D-xylulose 5-phosphate: step 6/6. In terms of biological role, catalyzes the conversion of 1-hydroxy-2-methyl-2-(E)-butenyl 4-diphosphate (HMBPP) into a mixture of isopentenyl diphosphate (IPP) and dimethylallyl diphosphate (DMAPP). Acts in the terminal step of the DOXP/MEP pathway for isoprenoid precursor biosynthesis. This is 4-hydroxy-3-methylbut-2-enyl diphosphate reductase from Clostridium perfringens (strain ATCC 13124 / DSM 756 / JCM 1290 / NCIMB 6125 / NCTC 8237 / Type A).